Consider the following 655-residue polypeptide: p-hydroxybenzoic acid efflux pump subunit AaeB (655 aa).

Helical transmembrane passes span 13-33 (FAVKLACAIVLALFVGFHFQL), 38-58 (WAVLTAAIVAAGPAFAAGGEP), 69-89 (LRIIGTFIGCIAALTIIITMI), 93-113 (LLMILVCCIWAGFCTWISSLV), 121-141 (WGLSGYTALIIVITIQAEPLL), 152-172 (EIVIGIVCAIMADLLFSPRSV), 370-390 (LFWLWTGWTSGSGAMVMIAVV), 407-427 (FIYGTLAALPLGLLYFLVIIP), 431-451 (QSMLLLCLSLAVLGFFLGIEV), 459-479 (MGALASTINIIVLDNPMTFHF), and 482-502 (FLDSALGQIVGCMMAFIVILL).

The protein belongs to the aromatic acid exporter ArAE (TC 2.A.85) family.

The protein localises to the cell inner membrane. Its function is as follows. Forms an efflux pump with AaeA. Could function as a metabolic relief valve, allowing to eliminate certain compounds when they accumulate to high levels in the cell. The protein is p-hydroxybenzoic acid efflux pump subunit AaeB of Citrobacter koseri (strain ATCC BAA-895 / CDC 4225-83 / SGSC4696).